Here is a 157-residue protein sequence, read N- to C-terminus: 2-C-methyl-D-erythritol 2,4-cyclodiphosphate synthase (157 aa).

Residues Asp-8 and His-10 each coordinate a divalent metal cation. 4-CDP-2-C-methyl-D-erythritol 2-phosphate-binding positions include 8–10 and 34–35; these read DVH and HS. Residue His-42 participates in a divalent metal cation binding. 4-CDP-2-C-methyl-D-erythritol 2-phosphate contacts are provided by residues 56 to 58, 61 to 65, 100 to 106, 132 to 135, and Phe-139; these read DIG, FPDTD, AQKPKMA, and TTTE.

This sequence belongs to the IspF family. As to quaternary structure, homotrimer. A divalent metal cation serves as cofactor.

It catalyses the reaction 4-CDP-2-C-methyl-D-erythritol 2-phosphate = 2-C-methyl-D-erythritol 2,4-cyclic diphosphate + CMP. It participates in isoprenoid biosynthesis; isopentenyl diphosphate biosynthesis via DXP pathway; isopentenyl diphosphate from 1-deoxy-D-xylulose 5-phosphate: step 4/6. Functionally, involved in the biosynthesis of isopentenyl diphosphate (IPP) and dimethylallyl diphosphate (DMAPP), two major building blocks of isoprenoid compounds. Catalyzes the conversion of 4-diphosphocytidyl-2-C-methyl-D-erythritol 2-phosphate (CDP-ME2P) to 2-C-methyl-D-erythritol 2,4-cyclodiphosphate (ME-CPP) with a corresponding release of cytidine 5-monophosphate (CMP). The sequence is that of 2-C-methyl-D-erythritol 2,4-cyclodiphosphate synthase from Alkaliphilus oremlandii (strain OhILAs) (Clostridium oremlandii (strain OhILAs)).